A 124-amino-acid polypeptide reads, in one-letter code: S-adenosylmethionine decarboxylase proenzyme (124 aa).

Catalysis depends on S70, which acts as the Schiff-base intermediate with substrate; via pyruvic acid. Residue S70 is modified to Pyruvic acid (Ser); by autocatalysis. H75 acts as the Proton acceptor; for processing activity in catalysis. C90 serves as the catalytic Proton donor; for catalytic activity.

It belongs to the prokaryotic AdoMetDC family. Type 1 subfamily. As to quaternary structure, heterotetramer of two alpha and two beta chains arranged as a dimer of alpha/beta heterodimers. Pyruvate serves as cofactor. In terms of processing, is synthesized initially as an inactive proenzyme. Formation of the active enzyme involves a self-maturation process in which the active site pyruvoyl group is generated from an internal serine residue via an autocatalytic post-translational modification. Two non-identical subunits are generated from the proenzyme in this reaction, and the pyruvate is formed at the N-terminus of the alpha chain, which is derived from the carboxyl end of the proenzyme. The post-translation cleavage follows an unusual pathway, termed non-hydrolytic serinolysis, in which the side chain hydroxyl group of the serine supplies its oxygen atom to form the C-terminus of the beta chain, while the remainder of the serine residue undergoes an oxidative deamination to produce ammonia and the pyruvoyl group blocking the N-terminus of the alpha chain.

The enzyme catalyses S-adenosyl-L-methionine + H(+) = S-adenosyl 3-(methylsulfanyl)propylamine + CO2. The protein operates within amine and polyamine biosynthesis; S-adenosylmethioninamine biosynthesis; S-adenosylmethioninamine from S-adenosyl-L-methionine: step 1/1. In terms of biological role, catalyzes the decarboxylation of S-adenosylmethionine to S-adenosylmethioninamine (dcAdoMet), the propylamine donor required for the synthesis of the polyamines spermine and spermidine from the diamine putrescine. The polypeptide is S-adenosylmethionine decarboxylase proenzyme (Pyrobaculum neutrophilum (strain DSM 2338 / JCM 9278 / NBRC 100436 / V24Sta) (Thermoproteus neutrophilus)).